Consider the following 124-residue polypeptide: Large ribosomal subunit protein uL18 (124 aa).

It belongs to the universal ribosomal protein uL18 family. As to quaternary structure, part of the 50S ribosomal subunit; part of the 5S rRNA/L5/L18/L25 subcomplex. Contacts the 5S and 23S rRNAs.

In terms of biological role, this is one of the proteins that bind and probably mediate the attachment of the 5S RNA into the large ribosomal subunit, where it forms part of the central protuberance. In Orientia tsutsugamushi (strain Boryong) (Rickettsia tsutsugamushi), this protein is Large ribosomal subunit protein uL18.